A 63-amino-acid polypeptide reads, in one-letter code: Conotoxin Pn-B01411 (63 aa).

Residues 1–22 form the signal peptide; it reads MRCFPVFIILLLLMASAPSFDA. Positions 23 to 49 are excised as a propeptide; that stretch reads RPKTEDDVPLSSFRDNLKRTLRTLLDP. Residue isoleucine 62 is modified to Isoleucine amide.

This sequence belongs to the conotoxin T superfamily. In terms of processing, contains 2 disulfide bonds that can be either 'C1-C3, C2-C4' or 'C1-C4, C2-C3', since these disulfide connectivities have been observed for conotoxins with cysteine framework V (for examples, see AC P0DQQ7 and AC P81755). Expressed by the venom duct.

It localises to the secreted. This chain is Conotoxin Pn-B01411, found in Conus pennaceus (Feathered cone).